We begin with the raw amino-acid sequence, 96 residues long: (4S)-4-hydroxy-5-phosphonooxypentane-2,3-dione isomerase (96 aa).

An ABM domain is found at 2-91; the sequence is HVTLVEINVH…MTGPRKKRLF (90 aa).

Belongs to the LsrG family. Homodimer.

Its subcellular location is the cytoplasm. The enzyme catalyses (2S)-2-hydroxy-3,4-dioxopentyl phosphate = 3-hydroxy-2,4-dioxopentyl phosphate. Functionally, involved in the degradation of phospho-AI-2, thereby terminating induction of the lsr operon and closing the AI-2 signaling cycle. Catalyzes the conversion of (4S)-4-hydroxy-5-phosphonooxypentane-2,3-dione (P-DPD) to 3-hydroxy-5-phosphonooxypentane-2,4-dione (P-HPD). The polypeptide is (4S)-4-hydroxy-5-phosphonooxypentane-2,3-dione isomerase (Escherichia coli O9:H4 (strain HS)).